The primary structure comprises 275 residues: Ribosomal protein L11 methyltransferase (275 aa).

Thr-130, Gly-151, Asp-172, and Asn-213 together coordinate S-adenosyl-L-methionine.

It belongs to the methyltransferase superfamily. PrmA family.

It localises to the cytoplasm. The catalysed reaction is L-lysyl-[protein] + 3 S-adenosyl-L-methionine = N(6),N(6),N(6)-trimethyl-L-lysyl-[protein] + 3 S-adenosyl-L-homocysteine + 3 H(+). Functionally, methylates ribosomal protein L11. The protein is Ribosomal protein L11 methyltransferase of Wolinella succinogenes (strain ATCC 29543 / DSM 1740 / CCUG 13145 / JCM 31913 / LMG 7466 / NCTC 11488 / FDC 602W) (Vibrio succinogenes).